The sequence spans 511 residues: 2'-acyl-2-O-sulfo-trehalose (hydroxy)phthioceranyltransferase PapA1 (511 aa).

It belongs to the PapA acyltransferase family.

It carries out the reaction a (hydroxy)phthioceranyl-[(hydroxy)phthioceranic acid synthase] + 2'-palmitoyl/stearoyl-2-O-sulfo-alpha,alpha-trehalose = a 3'-(hydroxy)phthioceranyl-2'-palmitoyl/stearoyl-2-O-sulfo-alpha,alpha-trehalose + holo-[(hydroxy)phthioceranic acid synthase].. Required for the biosynthesis of sulfolipid-1 (SL-1), a major mycobacterial cell wall lipid. Catalyzes the acylation of trehalose-2-sulfate-2'-palmitate (SL659) by adding the (hydroxy)phthioceranoyl group at the 3'-position to yield the diacylated intermediate 2-palmitoyl-3-(C43)-phthioceranyl-alpha, alpha'-D-trehalose-2'-sulfate (SL1278). This Mycobacterium tuberculosis (strain CDC 1551 / Oshkosh) protein is 2'-acyl-2-O-sulfo-trehalose (hydroxy)phthioceranyltransferase PapA1 (papA1).